The chain runs to 546 residues: Chaperonin GroEL (546 aa).

Residues 29–32 (TLGP), K50, 86–90 (DGTTT), G414, 478–480 (NAA), and D494 each bind ATP.

This sequence belongs to the chaperonin (HSP60) family. In terms of assembly, forms a cylinder of 14 subunits composed of two heptameric rings stacked back-to-back. Interacts with the co-chaperonin GroES.

The protein resides in the cytoplasm. It catalyses the reaction ATP + H2O + a folded polypeptide = ADP + phosphate + an unfolded polypeptide.. In terms of biological role, together with its co-chaperonin GroES, plays an essential role in assisting protein folding. The GroEL-GroES system forms a nano-cage that allows encapsulation of the non-native substrate proteins and provides a physical environment optimized to promote and accelerate protein folding. In Psychrobacter arcticus (strain DSM 17307 / VKM B-2377 / 273-4), this protein is Chaperonin GroEL.